Reading from the N-terminus, the 334-residue chain is PDZ domain-containing protein MAGIX (334 aa).

Composition is skewed to basic and acidic residues over residues 1-13 (MEPR…DPRG) and 209-224 (LETH…EPRK). Disordered regions lie at residues 1–26 (MEPR…LAGP) and 209–306 (LETH…WLVP). The region spanning 125 to 209 (SVELVRGYAG…QLHLVIRRPL (85 aa)) is the PDZ domain. Residues 244 to 260 (GSRSSSTSLVQHPPSRT) show a composition bias toward polar residues. Phosphoserine is present on Ser272.

This is PDZ domain-containing protein MAGIX (MAGIX) from Homo sapiens (Human).